Reading from the N-terminus, the 328-residue chain is Beta-ketoacyl-[acyl-carrier-protein] synthase III (328 aa).

Catalysis depends on residues Cys113 and His252. The ACP-binding stretch occupies residues 253-257 (QANLR). Residue Asn282 is part of the active site.

This sequence belongs to the thiolase-like superfamily. FabH family. Homodimer.

The protein resides in the cytoplasm. The catalysed reaction is malonyl-[ACP] + acetyl-CoA + H(+) = 3-oxobutanoyl-[ACP] + CO2 + CoA. It functions in the pathway lipid metabolism; fatty acid biosynthesis. Its function is as follows. Catalyzes the condensation reaction of fatty acid synthesis by the addition to an acyl acceptor of two carbons from malonyl-ACP. Catalyzes the first condensation reaction which initiates fatty acid synthesis and may therefore play a role in governing the total rate of fatty acid production. Possesses both acetoacetyl-ACP synthase and acetyl transacylase activities. Its substrate specificity determines the biosynthesis of branched-chain and/or straight-chain of fatty acids. The sequence is that of Beta-ketoacyl-[acyl-carrier-protein] synthase III from Campylobacter fetus subsp. fetus (strain 82-40).